The following is a 220-amino-acid chain: Uracil phosphoribosyltransferase 2 (220 aa).

77 to 80 (ARDI) lines the GTP pocket. 5-phospho-alpha-D-ribose 1-diphosphate contacts are provided by arginine 87 and arginine 113. Residue arginine 134 participates in GTP binding. 5-phospho-alpha-D-ribose 1-diphosphate-binding positions include aspartate 140 and 140–148 (DPLLATGNS). Tyrosine 204 contributes to the D-ribose 5-phosphate binding site. Uracil-binding positions include valine 205 and 210 to 212 (GDF). Residue aspartate 211 coordinates 5-phospho-alpha-D-ribose 1-diphosphate.

This sequence belongs to the UPRTase family. It depends on Mg(2+) as a cofactor.

It catalyses the reaction UMP + diphosphate = 5-phospho-alpha-D-ribose 1-diphosphate + uracil. It participates in pyrimidine metabolism; UMP biosynthesis via salvage pathway; UMP from uracil: step 1/1. Its activity is regulated as follows. Allosterically activated by GTP. Functionally, catalyzes the conversion of uracil and 5-phospho-alpha-D-ribose 1-diphosphate (PRPP) to UMP and diphosphate. This Schizosaccharomyces pombe (strain 972 / ATCC 24843) (Fission yeast) protein is Uracil phosphoribosyltransferase 2.